We begin with the raw amino-acid sequence, 152 residues long: Regulatory protein RecX (152 aa).

This sequence belongs to the RecX family.

Its subcellular location is the cytoplasm. Its function is as follows. Modulates RecA activity. The polypeptide is Regulatory protein RecX (Haemophilus influenzae (strain 86-028NP)).